Here is a 189-residue protein sequence, read N- to C-terminus: Probable nicotinate-nucleotide adenylyltransferase (189 aa).

This sequence belongs to the NadD family.

The catalysed reaction is nicotinate beta-D-ribonucleotide + ATP + H(+) = deamido-NAD(+) + diphosphate. The protein operates within cofactor biosynthesis; NAD(+) biosynthesis; deamido-NAD(+) from nicotinate D-ribonucleotide: step 1/1. Catalyzes the reversible adenylation of nicotinate mononucleotide (NaMN) to nicotinic acid adenine dinucleotide (NaAD). This Bacillus cereus (strain AH187) protein is Probable nicotinate-nucleotide adenylyltransferase.